An 83-amino-acid chain; its full sequence is Defensin-1 (83 aa).

Residues 1–33 (MAGKGVGSRLSTLFLLVLLVITIGMMQVQVAEG) form the signal peptide. Disulfide bonds link Cys36–Cys82, Cys47–Cys67, Cys53–Cys76, and Cys57–Cys78.

The protein belongs to the DEFL family.

It is found in the secreted. Its function is as follows. Plant defense peptide. Has antifungal activity against B.cinera, F.oxysporum, F.solani and H.annosum with IC(50) values of 0.4 ug/ml, 2.9 ug/ml, 0.9 ug/ml and 1.4 ug/ml, respectively. Has modest antifungal activity against C.albicans and T.reesei. Causes thickening of F.oxysporum hyphae and an increase in their branching. Lacks antibacterial activity against the Gram-negative bacteria E.coli and E.carotovora. The polypeptide is Defensin-1 (Pinus sylvestris (Scotch pine)).